Consider the following 422-residue polypeptide: 3-phosphoshikimate 1-carboxyvinyltransferase (422 aa).

Positions 20, 21, and 25 each coordinate 3-phosphoshikimate. K20 contacts phosphoenolpyruvate. G90 and R118 together coordinate phosphoenolpyruvate. The 3-phosphoshikimate site is built by S161, S162, Q163, S189, D305, and K332. Q163 contacts phosphoenolpyruvate. D305 acts as the Proton acceptor in catalysis. R336 and R378 together coordinate phosphoenolpyruvate.

This sequence belongs to the EPSP synthase family. In terms of assembly, monomer.

It localises to the cytoplasm. The enzyme catalyses 3-phosphoshikimate + phosphoenolpyruvate = 5-O-(1-carboxyvinyl)-3-phosphoshikimate + phosphate. It participates in metabolic intermediate biosynthesis; chorismate biosynthesis. Catalyzes the transfer of the enolpyruvyl moiety of phosphoenolpyruvate (PEP) to the 5-hydroxyl of shikimate-3-phosphate (S3P) to produce enolpyruvyl shikimate-3-phosphate and inorganic phosphate. In Nitrosopumilus maritimus (strain SCM1), this protein is 3-phosphoshikimate 1-carboxyvinyltransferase.